The chain runs to 244 residues: Uridylate kinase (244 aa).

15 to 18 serves as a coordination point for ATP; the sequence is KLSG. The involved in allosteric activation by GTP stretch occupies residues 23–28; that stretch reads GSEGFG. G57 provides a ligand contact to UMP. 2 residues coordinate ATP: G58 and R62. Residues D77 and 138 to 145 contribute to the UMP site; that span reads TGNPFFTT. Residues T165, F171, and D174 each coordinate ATP.

This sequence belongs to the UMP kinase family. In terms of assembly, homohexamer.

The protein resides in the cytoplasm. The catalysed reaction is UMP + ATP = UDP + ADP. The protein operates within pyrimidine metabolism; CTP biosynthesis via de novo pathway; UDP from UMP (UMPK route): step 1/1. Allosterically activated by GTP. Inhibited by UTP. Catalyzes the reversible phosphorylation of UMP to UDP. This is Uridylate kinase from Aeromonas salmonicida (strain A449).